Reading from the N-terminus, the 938-residue chain is Isoleucine--tRNA ligase (938 aa).

The 'HIGH' region motif lies at 58–68 (PYANGSIHIGH). Position 183 is an N6-acetyllysine (K183). E561 lines the L-isoleucyl-5'-AMP pocket. Positions 602-606 (KMSKS) match the 'KMSKS' region motif. K605 provides a ligand contact to ATP. Zn(2+) is bound by residues C901, C904, C921, and C924.

It belongs to the class-I aminoacyl-tRNA synthetase family. IleS type 1 subfamily. In terms of assembly, monomer. It depends on Zn(2+) as a cofactor.

It localises to the cytoplasm. The enzyme catalyses tRNA(Ile) + L-isoleucine + ATP = L-isoleucyl-tRNA(Ile) + AMP + diphosphate. Catalyzes the attachment of isoleucine to tRNA(Ile). As IleRS can inadvertently accommodate and process structurally similar amino acids such as valine, to avoid such errors it has two additional distinct tRNA(Ile)-dependent editing activities. One activity is designated as 'pretransfer' editing and involves the hydrolysis of activated Val-AMP. The other activity is designated 'posttransfer' editing and involves deacylation of mischarged Val-tRNA(Ile). This is Isoleucine--tRNA ligase from Escherichia coli O6:H1 (strain CFT073 / ATCC 700928 / UPEC).